Here is a 461-residue protein sequence, read N- to C-terminus: Bifunctional protein GlmU (461 aa).

The segment at 1-232 is pyrophosphorylase; the sequence is MNLQIIILAA…SFEVQGINNR (232 aa). UDP-N-acetyl-alpha-D-glucosamine-binding positions include 8–11, lysine 22, glutamine 73, and 78–79; these read LAAG and GT. Residue aspartate 102 coordinates Mg(2+). Positions 142, 157, and 230 each coordinate UDP-N-acetyl-alpha-D-glucosamine. Asparagine 230 contacts Mg(2+). The tract at residues 233–253 is linker; that stretch reads QQLQQLERIWQQRAANQLMEK. Residues 254-461 are N-acetyltransferase; the sequence is GVTLADANRF…WKRPAKRERD (208 aa). Arginine 336 and lysine 354 together coordinate UDP-N-acetyl-alpha-D-glucosamine. Histidine 366 functions as the Proton acceptor in the catalytic mechanism. Tyrosine 369 and asparagine 380 together coordinate UDP-N-acetyl-alpha-D-glucosamine. Acetyl-CoA is bound by residues alanine 383, 389–390, serine 408, and alanine 426; that span reads NY.

The protein in the N-terminal section; belongs to the N-acetylglucosamine-1-phosphate uridyltransferase family. This sequence in the C-terminal section; belongs to the transferase hexapeptide repeat family. As to quaternary structure, homotrimer. Requires Mg(2+) as cofactor.

Its subcellular location is the cytoplasm. The enzyme catalyses alpha-D-glucosamine 1-phosphate + acetyl-CoA = N-acetyl-alpha-D-glucosamine 1-phosphate + CoA + H(+). The catalysed reaction is N-acetyl-alpha-D-glucosamine 1-phosphate + UTP + H(+) = UDP-N-acetyl-alpha-D-glucosamine + diphosphate. Its pathway is nucleotide-sugar biosynthesis; UDP-N-acetyl-alpha-D-glucosamine biosynthesis; N-acetyl-alpha-D-glucosamine 1-phosphate from alpha-D-glucosamine 6-phosphate (route II): step 2/2. It participates in nucleotide-sugar biosynthesis; UDP-N-acetyl-alpha-D-glucosamine biosynthesis; UDP-N-acetyl-alpha-D-glucosamine from N-acetyl-alpha-D-glucosamine 1-phosphate: step 1/1. It functions in the pathway bacterial outer membrane biogenesis; LPS lipid A biosynthesis. Functionally, catalyzes the last two sequential reactions in the de novo biosynthetic pathway for UDP-N-acetylglucosamine (UDP-GlcNAc). The C-terminal domain catalyzes the transfer of acetyl group from acetyl coenzyme A to glucosamine-1-phosphate (GlcN-1-P) to produce N-acetylglucosamine-1-phosphate (GlcNAc-1-P), which is converted into UDP-GlcNAc by the transfer of uridine 5-monophosphate (from uridine 5-triphosphate), a reaction catalyzed by the N-terminal domain. The polypeptide is Bifunctional protein GlmU (Legionella pneumophila (strain Lens)).